The following is a 149-amino-acid chain: 3-dehydroquinate dehydratase (149 aa).

Residue Tyr-26 is the Proton acceptor of the active site. Asn-77, His-83, and Asp-90 together coordinate substrate. His-103 acts as the Proton donor in catalysis. Residues 104-105 and Arg-114 contribute to the substrate site; that span reads LS.

It belongs to the type-II 3-dehydroquinase family. As to quaternary structure, homododecamer.

The enzyme catalyses 3-dehydroquinate = 3-dehydroshikimate + H2O. The protein operates within metabolic intermediate biosynthesis; chorismate biosynthesis; chorismate from D-erythrose 4-phosphate and phosphoenolpyruvate: step 3/7. Functionally, catalyzes a trans-dehydration via an enolate intermediate. This Edwardsiella ictaluri (strain 93-146) protein is 3-dehydroquinate dehydratase.